A 154-amino-acid polypeptide reads, in one-letter code: Transcription antitermination protein NusB (154 aa).

The tract at residues 132 to 154 is disordered; the sequence is KDKQSPQSTPLDDSDKDESDQTN. Residues 143–154 show a composition bias toward acidic residues; the sequence is DDSDKDESDQTN.

Belongs to the NusB family.

Functionally, involved in transcription antitermination. Required for transcription of ribosomal RNA (rRNA) genes. Binds specifically to the boxA antiterminator sequence of the ribosomal RNA (rrn) operons. This chain is Transcription antitermination protein NusB, found in Bifidobacterium animalis subsp. lactis (strain AD011).